Reading from the N-terminus, the 423-residue chain is UDP-N-acetylglucosamine 1-carboxyvinyltransferase 1 (423 aa).

23–24 provides a ligand contact to phosphoenolpyruvate; it reads KN. Position 96 (Arg96) interacts with UDP-N-acetyl-alpha-D-glucosamine. Cys120 functions as the Proton donor in the catalytic mechanism. Cys120 is subject to 2-(S-cysteinyl)pyruvic acid O-phosphothioketal. Residues Asp309 and Val331 each contribute to the UDP-N-acetyl-alpha-D-glucosamine site.

This sequence belongs to the EPSP synthase family. MurA subfamily.

The protein localises to the cytoplasm. The catalysed reaction is phosphoenolpyruvate + UDP-N-acetyl-alpha-D-glucosamine = UDP-N-acetyl-3-O-(1-carboxyvinyl)-alpha-D-glucosamine + phosphate. It participates in cell wall biogenesis; peptidoglycan biosynthesis. Functionally, cell wall formation. Adds enolpyruvyl to UDP-N-acetylglucosamine. The polypeptide is UDP-N-acetylglucosamine 1-carboxyvinyltransferase 1 (Streptococcus pyogenes serotype M1).